A 547-amino-acid polypeptide reads, in one-letter code: MMGRPVLVLSQNMKRESGRKVQSGNINAAKTIADIIRTCLGPRAMMKMLLDPMGGIVMTNDGNAILREIQVQHPAAKSMIEISRTQDEEVGDGTTSVIILAGEMLSVAEQFLEQQMHPTVIISAYRKALDDMVNTLKEISTPVDTNDRELMLKIINSAINTKAIKLWADMACGIALDAVKTVELEENGRKEIDIKKYAKVEKIPGGIIEDSCVLRGVMVNKDVTHPKMRRLIKNPRIILLDCSLEYKKGESQTEIEITREEDFARILQMEEEYIQQVCEDIIRLKPDVVITEKGISDLAQHYLVKANITAVRRVRKTDNNRIARACGARIASRTDELREEDVGTGAGLFEIKKIGDEYFTFITDCKDPKACTIVLRGASKEILAEVERNLQDAMQVCRNVVIDPYLVPGGGASEMSVAHILTEKSKTMTGVEQWPYRAVAQALEVIPRTLIQNCGASTIRILTSLRAKHTQEGCQTWGVDGEAGVLADMKELGIWEPLAVKLQTYKTAVETAILLLRIDDIVSGHKKKGEDHGRQPAAAPEAPQQAE.

G41 contacts ADP. An ATP-binding site is contributed by G41. D92 lines the Mg(2+) pocket. Residues G93, T94, T95, S96, T161, and K162 each coordinate ADP. Residues G93, T94, and T95 each contribute to the ATP site. C365 and C371 are joined by a disulfide. 5 residues coordinate ADP: G410, G481, E482, E496, and K501. The ATP site is built by G410 and G481. E496 contacts ATP. A compositionally biased stretch (basic and acidic residues) spans 525-534 (HKKKGEDHGR). Residues 525 to 547 (HKKKGEDHGRQPAAAPEAPQQAE) form a disordered region. The span at 535-547 (QPAAAPEAPQQAE) shows a compositional bias: low complexity.

This sequence belongs to the TCP-1 chaperonin family. As to quaternary structure, component of the chaperonin-containing T-complex (TRiC), a hexadecamer composed of two identical back-to-back stacked rings enclosing a protein folding chamber. Each ring is made up of eight different subunits: TCP1/CCT1, CCT2, CCT3, CCT4, CCT5, CCT6A/CCT6, CCT7, CCT8.

It localises to the cytoplasm. It carries out the reaction ATP + H2O = ADP + phosphate + H(+). In terms of biological role, component of the chaperonin-containing T-complex (TRiC), a molecular chaperone complex that assists the folding of actin, tubulin and other proteins upon ATP hydrolysis. This chain is T-complex protein 1 subunit gamma (cct3), found in Xenopus laevis (African clawed frog).